A 185-amino-acid polypeptide reads, in one-letter code: MGYPGKNHKSYQTPKRPFEKTRIEEETRLVIEYGLRNKREVWKAQSHLRKYRKAARELLALMSSATNQTVFEAKKSELISHMQRAGLLGPDADIDNVLALKVPAQLERRLQTLVYRKGLARSPKQARQLVTHGHIAIGGRRVTVPGYLVTRGEETTISYAGKSPFVDASHAERTRITRPTGAGVN.

In terms of domain architecture, S4 RNA-binding spans 108–170 (RRLQTLVYRK…GKSPFVDASH (63 aa)).

The protein belongs to the universal ribosomal protein uS4 family. Part of the 30S ribosomal subunit. Contacts protein S5. The interaction surface between S4 and S5 is involved in control of translational fidelity.

One of the primary rRNA binding proteins, it binds directly to 16S rRNA where it nucleates assembly of the body of the 30S subunit. In terms of biological role, with S5 and S12 plays an important role in translational accuracy. This Methanoregula boonei (strain DSM 21154 / JCM 14090 / 6A8) protein is Small ribosomal subunit protein uS4.